The following is a 553-amino-acid chain: Glycerol-3-phosphate dehydrogenase (553 aa).

FAD is bound at residue 13 to 41 (DLIVIGGGINGVGTARDGALRGLKTLLIE).

It belongs to the FAD-dependent glycerol-3-phosphate dehydrogenase family. The cofactor is FAD.

Its subcellular location is the cytoplasm. It catalyses the reaction a quinone + sn-glycerol 3-phosphate = dihydroxyacetone phosphate + a quinol. This is Glycerol-3-phosphate dehydrogenase (glpD) from Synechocystis sp. (strain ATCC 27184 / PCC 6803 / Kazusa).